Reading from the N-terminus, the 445-residue chain is GTPase Der (445 aa).

EngA-type G domains follow at residues 3–167 (PVIA…YAGQ) and 180–353 (IKIA…AAAM). Residues 9-16 (GRPNVGKS), 56-60 (DTGGF), 119-122 (NKAE), 186-193 (GRPNVGKS), 233-237 (DTAGL), and 298-301 (NKWD) contribute to the GTP site. The 85-residue stretch at 354-438 (AKLPTPKLTR…PLRIEFRSSN (85 aa)) folds into the KH-like domain.

This sequence belongs to the TRAFAC class TrmE-Era-EngA-EngB-Septin-like GTPase superfamily. EngA (Der) GTPase family. Associates with the 50S ribosomal subunit.

In terms of biological role, GTPase that plays an essential role in the late steps of ribosome biogenesis. This is GTPase Der from Burkholderia lata (strain ATCC 17760 / DSM 23089 / LMG 22485 / NCIMB 9086 / R18194 / 383).